A 496-amino-acid chain; its full sequence is Probable cytosol aminopeptidase (496 aa).

2 residues coordinate Mn(2+): K266 and D271. K278 is an active-site residue. The Mn(2+) site is built by D289, D348, and E350. Residue R352 is part of the active site.

It belongs to the peptidase M17 family. Mn(2+) is required as a cofactor.

The protein resides in the cytoplasm. It carries out the reaction Release of an N-terminal amino acid, Xaa-|-Yaa-, in which Xaa is preferably Leu, but may be other amino acids including Pro although not Arg or Lys, and Yaa may be Pro. Amino acid amides and methyl esters are also readily hydrolyzed, but rates on arylamides are exceedingly low.. It catalyses the reaction Release of an N-terminal amino acid, preferentially leucine, but not glutamic or aspartic acids.. Functionally, presumably involved in the processing and regular turnover of intracellular proteins. Catalyzes the removal of unsubstituted N-terminal amino acids from various peptides. The sequence is that of Probable cytosol aminopeptidase from Azotobacter vinelandii (strain DJ / ATCC BAA-1303).